Consider the following 340-residue polypeptide: MDKRKESESATNGHLVKRIRIQDSSLITEGSVLQRTSDLNVPNLQMFGHTAEVLVARFDPSGSYFASGGMDRQILLWNVFGDVKNYGVLNGCKGAITDLQWSRDSRVVYCSSSDTHLMSWDAVSGQKIRKHKGHAGVVNALDVLKVGSELLTSVSDDCTMKVWDSRSKDCIKTIEEKYPLTAVAIAQQGTQVFIGGIDGAIKIWDLRNNHCSHVLKGHKDIITSLAISKDGSSLLSNSMDNTVRIFDVKPFASAQRQLQIFEGAIHGQEHNLLGVAWSRNSRFVGAGSSDKNVYVWSATGDLRYVLPGHEGSVNHVDFHPHQDIILSCSSDRTIFLGELN.

WD repeat units follow at residues 48 to 87, 91 to 130, 133 to 173, 175 to 214, 217 to 256, 267 to 306, and 308 to 339; these read GHTA…KNYG, GCKG…KIRK, GHAG…CIKT, EEKY…CSHV, GHKD…SAQR, GQEH…RYVL, and GHEG…LGEL.

As to quaternary structure, belongs to the 40S cdc5-associated complex (or cwf complex), a spliceosome sub-complex reminiscent of a late-stage spliceosome composed of the U2, U5 and U6 snRNAs and at least brr2, cdc5, cwf2/prp3, cwf3/syf1, cwf4/syf3, cwf5/ecm2, spp42/cwf6, cwf7/spf27, cwf8, cwf9, cwf10, cwf11, cwf12, prp45/cwf13, cwf14, cwf15, cwf16, cwf17, cwf18, cwf19, cwf20, cwf21, cwf22, cwf23, cwf24, cwf25, cwf26, cyp7/cwf27, cwf28, cwf29/ist3, lea1, msl1, prp5/cwf1, prp10, prp12/sap130, prp17, prp22, sap61, sap62, sap114, sap145, slu7, smb1, smd1, smd3, smf1, smg1 and syf2.

The protein resides in the nucleus. Functionally, involved in mRNA splicing where it associates with cdc5 and the other cwf proteins as part of the spliceosome. This chain is Pre-mRNA-splicing factor cwf17 (cwf17), found in Schizosaccharomyces pombe (strain 972 / ATCC 24843) (Fission yeast).